Reading from the N-terminus, the 405-residue chain is Insertion element IS110 uncharacterized 43.6 kDa protein (405 aa).

The polypeptide is Insertion element IS110 uncharacterized 43.6 kDa protein (Streptomyces coelicolor (strain ATCC BAA-471 / A3(2) / M145)).